Here is a 422-residue protein sequence, read N- to C-terminus: Enolase (422 aa).

Q162 serves as a coordination point for (2R)-2-phosphoglycerate. Catalysis depends on E204, which acts as the Proton donor. Positions 241, 284, and 311 each coordinate Mg(2+). The (2R)-2-phosphoglycerate site is built by K336, R365, S366, and K387. Residue K336 is the Proton acceptor of the active site.

It belongs to the enolase family. The cofactor is Mg(2+).

The protein localises to the cytoplasm. The protein resides in the secreted. It localises to the cell surface. The enzyme catalyses (2R)-2-phosphoglycerate = phosphoenolpyruvate + H2O. It functions in the pathway carbohydrate degradation; glycolysis; pyruvate from D-glyceraldehyde 3-phosphate: step 4/5. Its function is as follows. Catalyzes the reversible conversion of 2-phosphoglycerate (2-PG) into phosphoenolpyruvate (PEP). It is essential for the degradation of carbohydrates via glycolysis. This is Enolase from Bartonella quintana (strain Toulouse) (Rochalimaea quintana).